A 221-amino-acid chain; its full sequence is Extracellular superoxide dismutase [Cu-Zn] (221 aa).

The N-terminal stretch at 1–19 (MKTRVVLILALSVCIEAAS) is a signal peptide. Asn-56 is a glycosylation site (N-linked (GlcNAc...) asparagine). Residues His-70, His-72, and His-87 each coordinate Cu cation. A disulfide bridge connects residues Cys-81 and Cys-170. Zn(2+)-binding residues include His-87, His-95, His-104, and Asp-107. His-144 provides a ligand contact to Cu cation.

This sequence belongs to the Cu-Zn superoxide dismutase family. The cofactor is Cu cation. It depends on Zn(2+) as a cofactor. As to expression, isoform 2 is preferentially expressed in eggs.

The protein localises to the secreted. Its subcellular location is the extracellular space. It localises to the membrane. The catalysed reaction is 2 superoxide + 2 H(+) = H2O2 + O2. Protects cells against oxidative stress by converting superoxide radicals to hydrogen peroxide. Oxidative stress is involved in various biological dysfunctions and senescence. The sequence is that of Extracellular superoxide dismutase [Cu-Zn] (sod-4) from Caenorhabditis elegans.